Here is a 38-residue protein sequence, read N- to C-terminus: NAD-reducing hydrogenase HoxS subunit beta (38 aa).

This sequence belongs to the [NiFe]/[NiFeSe] hydrogenase large subunit family. Tetramer of an alpha and a gamma subunits (flavin-containing dimer), and a delta and a nickel-containing beta subunits (hydrogenase dimer). FMN serves as cofactor. Requires Ni(2+) as cofactor.

Its subcellular location is the cytoplasm. It catalyses the reaction H2 + NAD(+) = NADH + H(+). This is NAD-reducing hydrogenase HoxS subunit beta (hoxH) from Rhodococcus opacus (Nocardia opaca).